A 340-amino-acid polypeptide reads, in one-letter code: Trimethylamine N-oxide transport system ATP-binding protein TmoW (340 aa).

An ABC transporter domain is found at 32 to 268; sequence GRSFDDIRAD…PTTGYVAKFT (237 aa). 64–71 serves as a coordination point for ATP; it reads GLSGSGKS.

The protein belongs to the ABC transporter superfamily. As to quaternary structure, the complex is probably composed of two ATP-binding proteins (TmoW), two transmembrane proteins (TmoV) and a solute-binding protein (TmoX).

Its subcellular location is the cell inner membrane. It carries out the reaction a quaternary ammonium(out) + ATP + H2O = a quaternary ammonium(in) + ADP + phosphate + H(+). Its function is as follows. Part of the ABC transporter complex TmoXWV involved in trimethylamine N-oxide (TMAO) import. Responsible for energy coupling to the transport system. Is specific for TMAO and essential for TMAO metabolism. In Ruegeria pomeroyi (strain ATCC 700808 / DSM 15171 / DSS-3) (Silicibacter pomeroyi), this protein is Trimethylamine N-oxide transport system ATP-binding protein TmoW.